The chain runs to 306 residues: D-alanine--D-alanine ligase (306 aa).

The 203-residue stretch at 101–303 (KLLWQGAGLP…FSQLVVRILE (203 aa)) folds into the ATP-grasp domain. 134–189 (ISALGLPLIVKPSREGSSVGMTKVVEENALQGALSLAFQHDDEILIEKWLCGPEFT) serves as a coordination point for ATP. Positions 257, 270, and 272 each coordinate Mg(2+).

This sequence belongs to the D-alanine--D-alanine ligase family. Requires Mg(2+) as cofactor. Mn(2+) is required as a cofactor.

It is found in the cytoplasm. The enzyme catalyses 2 D-alanine + ATP = D-alanyl-D-alanine + ADP + phosphate + H(+). It functions in the pathway cell wall biogenesis; peptidoglycan biosynthesis. In terms of biological role, cell wall formation. This is D-alanine--D-alanine ligase from Salmonella paratyphi A (strain ATCC 9150 / SARB42).